The chain runs to 504 residues: Maturase K (504 aa).

Belongs to the intron maturase 2 family. MatK subfamily.

The protein resides in the plastid. It is found in the chloroplast. Its function is as follows. Usually encoded in the trnK tRNA gene intron. Probably assists in splicing its own and other chloroplast group II introns. The chain is Maturase K from Matthiola incana (Common stock).